The chain runs to 833 residues: RNA-binding protein 5-A (833 aa).

A disordered region spans residues 1 to 87; the sequence is MGSDKRVSRS…GYHSDGDYMD (87 aa). Residues 102-182 form the RRM 1 domain; it reads KTIMLRGLPI…KTIAMHYSNP (81 aa). A RanBP2-type zinc finger spans residues 185–214; sequence KFEDWLCNKCGLYNFRRRLKCFRCGAAKAE. Positions 241–325 constitute an RRM 2 domain; sequence SAIILRNIGP…KTIGVDFAKS (85 aa). Polar residues predominate over residues 396 to 428; the sequence is TGAAEQGTAPQAESSSPVPATTSAVVCQSPQMY. 2 disordered regions span residues 396–458 and 523–559; these read TGAA…EEAA and AADG…TAQQ. A compositionally biased stretch (low complexity) spans 429–458; sequence QQPGSPTQSSTSTVAASATPASGTSAEEAA. A C2H2-type zinc finger spans residues 667–692; sequence LACLLCRRQFPNKDALTRHQQLSDLH. Residues 761–807 form the G-patch domain; it reads NSNIGNKMLQAMGWKEGSGLGRKSQGITAPIQAQVRMRGAGLGAKGS.

This sequence belongs to the RBM5/RBM10 family. Component of the spliceosome A complex (also known as the prespliceosome). Appears to dissociate from the spliceosome upon formation of the spliceosome B complex (also known as the precatalytic spliceosome), in which the heterotrimeric U4/U6.U5 snRNPs are bound.

The protein resides in the nucleus. Its function is as follows. Component of the spliceosome A complex. Regulates alternative splicing of a number of mRNAs. May modulate splice site pairing after recruitment of the U1 and U2 snRNPs to the 5' and 3' splice sites of the intron. The protein is RNA-binding protein 5-A (rbm5-a) of Xenopus laevis (African clawed frog).